The sequence spans 321 residues: Phospholipid phosphatase-related protein type 5 (321 aa).

6 helical membrane passes run 10–30 (SSML…AYYF), 62–82 (AVPP…VIIV), 122–142 (FLGI…AGQV), 196–213 (AALS…ITNT), 225–245 (VLCL…VAEY), and 252–272 (VIAG…CVVN).

Belongs to the PA-phosphatase related phosphoesterase family. As to expression, isoform 1 is expressed in brain, lung, kidney and colon. Isoform 2 is expressed in placenta, skeletal muscle and kidney.

It localises to the cell membrane. Its function is as follows. Induces filopodia formation and promotes neurite growth in a CDC42-independent manner; impedes neurite growth inhibitory-mediated axonal retraction. This is Phospholipid phosphatase-related protein type 5 from Homo sapiens (Human).